Reading from the N-terminus, the 698-residue chain is Dolichyl-diphosphooligosaccharide--protein glycosyltransferase subunit 2 (698 aa).

A signal peptide spans 1–29 (MAAAGGLPASATLLLLVIAAVAVAPLASA). At 30–600 (VRPVSDAHRS…RSPEKRPPKE (571 aa)) the chain is on the lumenal side. Residues 601 to 621 (LSFAFTGLTLLPIVGFLIGLM) traverse the membrane as a helical segment. The Cytoplasmic portion of the chain corresponds to 622–638 (RLGVNLKNFPSLPAPAA). A helical membrane pass occupies residues 639–659 (FASLFHAGIGAVLLLYVLFWI). Position 660 (Lys-660) is a topological domain, lumenal. A helical membrane pass occupies residues 661–681 (LDLFTTLKYLSFLGVFLVFVG). The Cytoplasmic segment spans residues 682–698 (HRALSYLSSTSAKQKTA).

It belongs to the SWP1 family. Component of the oligosaccharyltransferase (OST) complex.

The protein localises to the endoplasmic reticulum membrane. It participates in protein modification; protein glycosylation. Functionally, subunit of the oligosaccharyl transferase (OST) complex that catalyzes the initial transfer of a defined glycan (Glc(3)Man(9)GlcNAc(2) in eukaryotes) from the lipid carrier dolichol-pyrophosphate to an asparagine residue within an Asn-X-Ser/Thr consensus motif in nascent polypeptide chains, the first step in protein N-glycosylation. N-glycosylation occurs cotranslationally and the complex associates with the Sec61 complex at the channel-forming translocon complex that mediates protein translocation across the endoplasmic reticulum (ER). All subunits are required for a maximal enzyme activity. This is Dolichyl-diphosphooligosaccharide--protein glycosyltransferase subunit 2 (RPN2) from Oryza sativa subsp. japonica (Rice).